A 222-amino-acid polypeptide reads, in one-letter code: Superoxide dismutase [Mn], mitochondrial (222 aa).

The N-terminal 24 residues, 1–24 (MLCRAACSTSRKLVPALGSLGSRQ), are a transit peptide targeting the mitochondrion. Residue histidine 50 participates in Mn(2+) binding. Tyrosine 58 is modified (3'-nitrotyrosine). 2 positions are modified to N6-acetyllysine; alternate: lysine 68 and lysine 75. Lysine 68 and lysine 75 each carry N6-succinyllysine; alternate. Histidine 98 lines the Mn(2+) pocket. Lysine 114 carries the N6-acetyllysine modification. An N6-acetyllysine; alternate mark is found at lysine 122 and lysine 130. N6-succinyllysine; alternate occurs at positions 122 and 130. Mn(2+) contacts are provided by aspartate 183 and histidine 187. Lysine 202 carries the N6-acetyllysine modification.

This sequence belongs to the iron/manganese superoxide dismutase family. Homotetramer. The cofactor is Mn(2+). Nitrated under oxidative stress. Nitration coupled with oxidation inhibits the catalytic activity. In terms of processing, acetylation at Lys-122 decreases enzymatic activity. Deacetylated by SIRT3 upon exposure to ionizing radiations or after long fasting. Post-translationally, polyubiquitinated; leading to proteasomal degradation. Deubiquitinated by USP36 which increases protein stability.

The protein localises to the mitochondrion matrix. The catalysed reaction is 2 superoxide + 2 H(+) = H2O2 + O2. Functionally, destroys superoxide anion radicals which are normally produced within the cells and which are toxic to biological systems. The sequence is that of Superoxide dismutase [Mn], mitochondrial (SOD2) from Equus caballus (Horse).